The primary structure comprises 202 residues: Orotate phosphoribosyltransferase (202 aa).

5-phospho-alpha-D-ribose 1-diphosphate is bound by residues Lys-93 and 113-121 (EDIITTGGS). The orotate site is built by Thr-117 and Arg-145.

This sequence belongs to the purine/pyrimidine phosphoribosyltransferase family. PyrE subfamily. In terms of assembly, homodimer. It depends on Mg(2+) as a cofactor.

The enzyme catalyses orotidine 5'-phosphate + diphosphate = orotate + 5-phospho-alpha-D-ribose 1-diphosphate. It functions in the pathway pyrimidine metabolism; UMP biosynthesis via de novo pathway; UMP from orotate: step 1/2. In terms of biological role, catalyzes the transfer of a ribosyl phosphate group from 5-phosphoribose 1-diphosphate to orotate, leading to the formation of orotidine monophosphate (OMP). In Campylobacter hominis (strain ATCC BAA-381 / DSM 21671 / CCUG 45161 / LMG 19568 / NCTC 13146 / CH001A), this protein is Orotate phosphoribosyltransferase.